The following is a 581-amino-acid chain: A-type ATP synthase subunit A (581 aa).

232-239 (GPFGSGKT) contacts ATP.

This sequence belongs to the ATPase alpha/beta chains family. In terms of assembly, has multiple subunits with at least A(3), B(3), C, D, E, F, H, I and proteolipid K(x).

It localises to the cell membrane. The enzyme catalyses ATP + H2O + 4 H(+)(in) = ADP + phosphate + 5 H(+)(out). Functionally, component of the A-type ATP synthase that produces ATP from ADP in the presence of a proton gradient across the membrane. The A chain is the catalytic subunit. The polypeptide is A-type ATP synthase subunit A (Methanocorpusculum labreanum (strain ATCC 43576 / DSM 4855 / Z)).